The following is a 41-amino-acid chain: Conotoxin Bu22 (41 aa).

Residues 1 to 25 (SDRASDGRNAAANDRASDLVALTVR) constitute a propeptide that is removed on maturation. 2 disulfides stabilise this stretch: C27-C33 and C28-C40.

It belongs to the conotoxin A superfamily. In terms of tissue distribution, expressed by the venom duct.

It is found in the secreted. The polypeptide is Conotoxin Bu22 (Conus bullatus (Bubble cone)).